The primary structure comprises 156 residues: Persephin (156 aa).

A signal peptide spans Met-1–Gly-21. Disulfide bonds link Cys-66–Cys-124, Cys-93–Cys-152, and Cys-97–Cys-154.

Belongs to the TGF-beta family. GDNF subfamily. Homodimer; disulfide-linked. Interacts with GFRA4 coreceptor and RET: forms a 2:2:2 ternary complex composed of PSPN ligand, GFRA4 and RET receptor.

The protein resides in the secreted. Its function is as follows. Growth factor that exhibits neurotrophic activity on mesencephalic dopaminergic and motor neurons. Acts by binding to its coreceptor, GFRA4, leading to autophosphorylation and activation of the RET receptor. The polypeptide is Persephin (Homo sapiens (Human)).